The chain runs to 455 residues: Mycosin-4 (455 aa).

The N-terminal stretch at 1-25 (MTTSRTLRLLVVSALATLSGLGTPV) is a signal peptide. Residues 74-384 (SAQLADLDQV…NGTVDALAAV (311 aa)) enclose the Peptidase S8 domain. Active-site charge relay system residues include aspartate 98, histidine 129, and serine 329. A disordered region spans residues 389-417 (IPQAGTATSDPAPVAVPVPRRSTPGPSDR). Positions 394 to 412 (TATSDPAPVAVPVPRRSTP) are enriched in low complexity. The helical transmembrane segment at 432–452 (LALMATLATASRRLRPGRNGI) threads the bilayer.

It belongs to the peptidase S8 family.

The protein localises to the cell membrane. The polypeptide is Mycosin-4 (Mycobacterium tuberculosis (strain ATCC 25618 / H37Rv)).